The following is a 283-amino-acid chain: Nopaline-binding periplasmic protein (283 aa).

The signal sequence occupies residues 1–25 (MKFFNLNALAAVVTGVLLAAGPTQA). Cys-63 and Cys-70 are oxidised to a cystine.

This sequence belongs to the bacterial solute-binding protein 3 family.

The protein localises to the periplasm. In terms of biological role, component of the nopaline active transport system probably consisting of four subunits: Q, M, P and T. This system is also capable of transporting octopine provided that catabolic functions are induced with nopaline. This Agrobacterium fabrum (strain C58 / ATCC 33970) (Agrobacterium tumefaciens (strain C58)) protein is Nopaline-binding periplasmic protein (nocT).